The primary structure comprises 856 residues: Genome polyprotein (856 aa).

Positions 141 to 284 (KLTEGQMNHL…QSVLNSMIQF (144 aa)) constitute a Peptidase S30 domain. Catalysis depends on for P1 proteinase activity residues His192, Asp201, and Ser235. An Involved in interaction with stylet and aphid transmission motif is present at residues 334–337 (KITC). The Involved in virions binding and aphid transmission signature appears at 592–594 (PTK). The Peptidase C6 domain occupies 618–740 (LYIAKQGYCY…ESDIKHYRVG (123 aa)). Catalysis depends on for helper component proteinase activity residues Cys626 and His699.

It belongs to the potyviridae genome polyprotein family. In terms of processing, genome polyprotein of potyviruses undergoes post-translational proteolytic processing by the main proteinase NIa-pro resulting in the production of at least ten individual proteins. The P1 proteinase and the HC-pro cleave only their respective C-termini autocatalytically. 6K1 is essential for proper proteolytic separation of P3 from CI.

The catalysed reaction is Hydrolyzes a Gly-|-Gly bond at its own C-terminus, commonly in the sequence -Tyr-Xaa-Val-Gly-|-Gly, in the processing of the potyviral polyprotein.. In terms of biological role, required for aphid transmission and also has proteolytic activity. Only cleaves a Gly-Gly dipeptide at its own C-terminus. Interacts with virions and aphid stylets. Acts as a suppressor of RNA-mediated gene silencing, also known as post-transcriptional gene silencing (PTGS), a mechanism of plant viral defense that limits the accumulation of viral RNAs. May have RNA-binding activity. This Potato virus Y (strain O) (PVY) protein is Genome polyprotein.